Consider the following 283-residue polypeptide: Nickel/cobalt efflux system RcnA (283 aa).

The Periplasmic segment spans residues 1–5; that stretch reads MGEFS. The chain crosses the membrane as a helical span at residues 6-26; it reads ILLQQGNGWFFIPSAILLGIL. Topologically, residues 27 to 51 are cytoplasmic; sequence HGLEPGHSKTMMAAFIIAIKGTIKQ. Residues 52–72 form a helical membrane-spanning segment; it reads AFMLGLAATLSHTAVVWLIAL. Topologically, residues 73 to 85 are periplasmic; the sequence is GGMYLSRAYAAES. Residues 86 to 106 traverse the membrane as a helical segment; the sequence is VEPWLQLISAIIILGTACWMF. At 107–183 the chain is on the cytoplasmic side; the sequence is WRTWRGEQQW…FHGQKVTNEQ (77 aa). Positions 120–148 are enriched in basic and acidic residues; the sequence is SHHDHDHDHDHDHDHDHDHDHDHDHHGHT. Residues 120-149 form a disordered region; the sequence is SHHDHDHDHDHDHDHDHDHDHDHDHHGHTY. Residues 184 to 204 traverse the membrane as a helical segment; sequence ILLFGLTGGLIPCPAAITLLL. Over 205–218 the chain is Periplasmic; the sequence is ICIQLQALTLGATM. A helical transmembrane segment spans residues 219–239; sequence VLCFSLGLALTLVAVGVGAAI. Over 240 to 260 the chain is Cytoplasmic; sequence SVQQAVKRWNGFTTLARRAPY. The chain crosses the membrane as a helical span at residues 261 to 281; it reads FSSILIGLVGLYMGIHGYTGI. At 282-283 the chain is on the periplasmic side; the sequence is MQ.

Belongs to the NiCoT transporter (TC 2.A.52) family. RcnA subfamily.

Its subcellular location is the cell inner membrane. Its function is as follows. Efflux system for nickel and cobalt. The sequence is that of Nickel/cobalt efflux system RcnA (rcnA) from Salmonella arizonae (strain ATCC BAA-731 / CDC346-86 / RSK2980).